Here is a 788-residue protein sequence, read N- to C-terminus: Ribosome biogenesis protein ERB1 (788 aa).

The interval 1-91 (MGDLKGSRKR…SKPIREKSKP (91 aa)) is disordered. Basic and acidic residues predominate over residues 38–50 (LSDKSHDTEHSSD). The span at 51–78 (SEIELVDDLSSDDGEEYEDEFDSDEIPS) shows a compositional bias: acidic residues. A compositionally biased stretch (basic and acidic residues) spans 80–91 (IESKPIREKSKP). 6 WD repeats span residues 433 to 472 (GHSG…QIWS), 476 to 516 (SDEE…PEME), 613 to 651 (KGGG…LVKI), 654 to 699 (PGAR…RPYK), 703 to 742 (YHQK…DLLS), and 758 to 788 (TGEL…RLWT).

This sequence belongs to the WD repeat BOP1/ERB1 family. Component of the NOP7 complex, composed of ERB1, NOP7 and YTM1. The complex is held together by ERB1, which interacts with NOP7 via its N-terminal domain and with YTM1 via a high-affinity interaction between the seven-bladed beta-propeller domains of the 2 proteins. The NOP7 complex associates with the 66S pre-ribosome.

The protein resides in the nucleus. It is found in the nucleolus. The protein localises to the nucleoplasm. Component of the NOP7 complex, which is required for maturation of the 25S and 5.8S ribosomal RNAs and formation of the 60S ribosome. This chain is Ribosome biogenesis protein ERB1, found in Ajellomyces capsulatus (strain NAm1 / WU24) (Darling's disease fungus).